Consider the following 422-residue polypeptide: SH2 domain-containing protein 4A (422 aa).

Phosphoserine occurs at positions 117 and 123. Disordered regions lie at residues 141–190 (PQNV…EDEK) and 202–282 (SEWQ…VIRT). Composition is skewed to basic and acidic residues over residues 163–190 (TKKD…EDEK) and 212–231 (KAAD…DYKR). At Ser-233 the chain carries Phosphoserine. The region spanning 316 to 408 (WFHGILTLKK…LGKELLLFPC (93 aa)) is the SH2 domain.

Interacts with ESR1.

The protein resides in the cytoplasm. Functionally, inhibits estrogen-induced cell proliferation by competing with PLCG for binding to ESR1, blocking the effect of estrogen on PLCG and repressing estrogen-induced proliferation. May play a role in T-cell development and function. The chain is SH2 domain-containing protein 4A (Sh2d4a) from Rattus norvegicus (Rat).